The primary structure comprises 336 residues: Alpha-N-acetylgalactosaminide alpha-2,6-sialyltransferase 5 (336 aa).

Residues 1 to 8 (MKTLMRHG) are Cytoplasmic-facing. Residues 9–29 (LAVCLALTTMCTSLLLVYSSL) traverse the membrane as a helical; Signal-anchor for type II membrane protein segment. Residues 30–336 (GGQKERPPQQ…INHPENKPVF (307 aa)) lie on the Lumenal side of the membrane. Positions 32–81 (QKERPPQQQQQQQQQQQQASATGSSQPAAESSTQQRPGVPAGPRPLDGYL) are disordered. Residues 38 to 49 (QQQQQQQQQQQQ) are compositionally biased toward low complexity. Residues 50 to 67 (ASATGSSQPAAESSTQQR) are compositionally biased toward polar residues. Cys-96 and Cys-245 are disulfide-bonded. 2 N-linked (GlcNAc...) asparagine glycosylation sites follow: Asn-137 and Asn-161.

The protein belongs to the glycosyltransferase 29 family.

The protein localises to the golgi apparatus membrane. The catalysed reaction is a ganglioside GM1b (d18:1(4E)) + CMP-N-acetyl-beta-neuraminate = a ganglioside GD1alpha (d18:1(4E)) + CMP + H(+). It carries out the reaction N-acetyl-alpha-neuraminosyl-(2-&gt;3)-beta-D-galactosyl-(1-&gt;3)-N-acetyl-beta-D-glucosaminyl-(1-&gt;3)-beta-D-galactosyl-(1-&gt;4)-beta-D-glucosyl-(1&lt;-&gt;1')-N-acyl-sphing-4-enine + CMP-N-acetyl-beta-neuraminate = N-acetyl-alpha-neuraminosyl-(2-&gt;3)-beta-D-galactosyl-(1-&gt;3)-[N-acetyl-alpha-neuraminosyl-(2-&gt;6)]-N-acetyl-beta-D-glucosaminyl-(1-&gt;3)-beta-D-galactosyl-(1-&gt;4)-beta-D-glucosyl-(1&lt;-&gt;1')-N-acyl-sphing-4-enine + CMP + H(+). It functions in the pathway glycolipid biosynthesis. Its function is as follows. Predominantly catalyzes the biosynthesis of ganglioside GD1alpha from GM1b in the brain, by transferring the sialyl group (N-acetyl-alpha-neuraminyl or NeuAc) from CMP-NeuAc to the GalNAc residue on the NeuAc-alpha-2,3-Gal-beta-1,3-GalNAc sequence of GM1b. GD1alpha is a critical molecule in the communication and interaction between neuronal cells and their supportive cells, particularly in brain tissues, and functions as an adhesion molecule in the process of metastasis. Also shows activity towards sialyl Lc4Cer (N-acetyl-alpha-neuraminosyl-(2-&gt;3)-beta-D-galactosyl-(1-&gt;3)-N-acetyl-beta-D-glucosaminyl-(1-&gt;3)-beta-D-galactosyl-(1-&gt;4)-beta-D-glucosyl-(1&lt;-&gt;1')-N-acyl-sphing-4-enine) generating disialyl Lc4Cer, which can lead to the synthesis of disialyl Lewis a (Le(a)), suggested to be a cancer-associated antigen. This chain is Alpha-N-acetylgalactosaminide alpha-2,6-sialyltransferase 5 (ST6GALNAC5), found in Homo sapiens (Human).